We begin with the raw amino-acid sequence, 393 residues long: Squamosa promoter-binding-like protein 17 (393 aa).

Low complexity predominate over residues Ala40–Ser49. Positions Ala40–Pro67 are disordered. An SBP-type zinc finger spans residues Pro71–Pro148. Residues Cys74, Cys79, Cys96, His99, Cys115, Cys118, His122, and Cys134 each contribute to the Zn(2+) site. The Bipartite nuclear localization signal signature appears at Lys131–Lys147. Residues Arg137–Pro148 are compositionally biased toward basic residues. Disordered regions lie at residues Arg137–Gly158, Trp273–Pro301, and Gly317–Leu393. Composition is skewed to polar residues over residues Trp273–Ser293 and Gly380–Leu393.

As to expression, expressed in young panicles.

Its subcellular location is the nucleus. Trans-acting factor that binds specifically to the consensus nucleotide sequence 5'-TNCGTACAA-3'. May be involved in panicle development. The sequence is that of Squamosa promoter-binding-like protein 17 (SPL17) from Oryza sativa subsp. japonica (Rice).